Reading from the N-terminus, the 136-residue chain is UPF0213 protein AHA_3736 (136 aa).

Residues 17–92 (SHWFIYMVRT…KQQSKAFKEQ (76 aa)) form the GIY-YIG domain. The tract at residues 114 to 136 (QKRPRYAAAKEGSDNRECQRQVD) is disordered. The segment covering 124-136 (EGSDNRECQRQVD) has biased composition (basic and acidic residues).

Belongs to the UPF0213 family.

This Aeromonas hydrophila subsp. hydrophila (strain ATCC 7966 / DSM 30187 / BCRC 13018 / CCUG 14551 / JCM 1027 / KCTC 2358 / NCIMB 9240 / NCTC 8049) protein is UPF0213 protein AHA_3736.